Consider the following 151-residue polypeptide: 6,7-dimethyl-8-ribityllumazine synthase (151 aa).

Residues Phe15, Ala49 to Glu51, and Ala73 to Ile75 each bind 5-amino-6-(D-ribitylamino)uracil. (2S)-2-hydroxy-3-oxobutyl phosphate is bound at residue Glu78–Thr79. Catalysis depends on His81, which acts as the Proton donor. Phe106 lines the 5-amino-6-(D-ribitylamino)uracil pocket. Arg120 serves as a coordination point for (2S)-2-hydroxy-3-oxobutyl phosphate.

Belongs to the DMRL synthase family. Forms an icosahedral capsid composed of 60 subunits, arranged as a dodecamer of pentamers.

It carries out the reaction (2S)-2-hydroxy-3-oxobutyl phosphate + 5-amino-6-(D-ribitylamino)uracil = 6,7-dimethyl-8-(1-D-ribityl)lumazine + phosphate + 2 H2O + H(+). It participates in cofactor biosynthesis; riboflavin biosynthesis; riboflavin from 2-hydroxy-3-oxobutyl phosphate and 5-amino-6-(D-ribitylamino)uracil: step 1/2. Its function is as follows. Catalyzes the formation of 6,7-dimethyl-8-ribityllumazine by condensation of 5-amino-6-(D-ribitylamino)uracil with 3,4-dihydroxy-2-butanone 4-phosphate. This is the penultimate step in the biosynthesis of riboflavin. This is 6,7-dimethyl-8-ribityllumazine synthase from Coxiella burnetii (strain CbuG_Q212) (Coxiella burnetii (strain Q212)).